The chain runs to 236 residues: tRNA1(Val) (adenine(37)-N6)-methyltransferase (236 aa).

It belongs to the methyltransferase superfamily. tRNA (adenine-N(6)-)-methyltransferase family.

It localises to the cytoplasm. It catalyses the reaction adenosine(37) in tRNA1(Val) + S-adenosyl-L-methionine = N(6)-methyladenosine(37) in tRNA1(Val) + S-adenosyl-L-homocysteine + H(+). In terms of biological role, specifically methylates the adenine in position 37 of tRNA(1)(Val) (anticodon cmo5UAC). In Actinobacillus pleuropneumoniae serotype 7 (strain AP76), this protein is tRNA1(Val) (adenine(37)-N6)-methyltransferase.